The following is a 136-amino-acid chain: ATP synthase epsilon chain (136 aa).

The segment at 112 to 136 (GNSADKLKAKESLNKARARSQAVGE) is disordered. Basic and acidic residues predominate over residues 116–125 (DKLKAKESLN).

The protein belongs to the ATPase epsilon chain family. F-type ATPases have 2 components, CF(1) - the catalytic core - and CF(0) - the membrane proton channel. CF(1) has five subunits: alpha(3), beta(3), gamma(1), delta(1), epsilon(1). CF(0) has three main subunits: a, b and c.

It localises to the cellular thylakoid membrane. Functionally, produces ATP from ADP in the presence of a proton gradient across the membrane. The sequence is that of ATP synthase epsilon chain from Prochlorococcus marinus (strain SARG / CCMP1375 / SS120).